The primary structure comprises 448 residues: Packaging protein 1 (448 aa).

Positions 1–76 (METKGRRSAA…SQPAKRGGLL (76 aa)) are disordered. The segment covering 22–31 (PRKRPTRRAP) has biased composition (basic residues). A compositionally biased stretch (polar residues) spans 56–67 (RPSSDSLLQEPS). 171–178 (GPTGCGKS) contributes to the ATP binding site. A DNA-binding region spans residues 440-448 (RAYRARKIK).

Belongs to the adenoviridae packaging protein 1 family. Homodimer. Part of a genome packaging complex composed of packaging proteins 1, 2 and 3; this complex specifically binds to the packaging sequence on the left end of viral genomic DNA and performs packaging of the viral genome. Interacts with protein 33K.

The protein resides in the virion. It is found in the host nucleus. It localises to the host nucleoplasm. The protein localises to the host nucleolus. Functionally, component of the packaging machinery which encapsidates the viral DNA into preformed capsids and transcriptional activator of the viral major late promoter (MLP). Binds, along with packaging proteins 2 and 3, to the specific packaging sequence on the left end of viral genomic DNA and displays ATPase activity thereby providing the power stroke of the packaging machinery. The activity of packaging protein IVa2 is stimulated by protein 33K which acts as a terminase. May be the protein that pumps DNA into the capsid powered by ATP hydrolysis. Specifically binds to the 5'-CG-3' nucleotides of the repeats making up the packaging sequence. Component of the DEF-A and DEF-B transcription factors that bind downstream elements of the major late promoter (MLP), and stimulate transcription from the MLP after initiation of viral DNA replication. DEF-A is a heterodimer packaging proteins 1 and 2 and DEF-B is a homodimer of packaging protein 1. This Human adenovirus B serotype 7 (HAdV-7) protein is Packaging protein 1.